The primary structure comprises 125 residues: Small ribosomal subunit protein uS12c (125 aa).

The protein belongs to the universal ribosomal protein uS12 family. As to quaternary structure, part of the 30S ribosomal subunit.

It localises to the plastid. Its subcellular location is the chloroplast. With S4 and S5 plays an important role in translational accuracy. Located at the interface of the 30S and 50S subunits. The chain is Small ribosomal subunit protein uS12c (rps12) from Tupiella akineta (Green alga).